Consider the following 279-residue polypeptide: Malonyl-[acyl-carrier protein] O-methyltransferase (279 aa).

The protein belongs to the methyltransferase superfamily.

It carries out the reaction malonyl-[ACP] + S-adenosyl-L-methionine = malonyl-[ACP] methyl ester + S-adenosyl-L-homocysteine. The protein operates within cofactor biosynthesis; biotin biosynthesis. In terms of biological role, converts the free carboxyl group of a malonyl-thioester to its methyl ester by transfer of a methyl group from S-adenosyl-L-methionine (SAM). It allows to synthesize pimeloyl-ACP via the fatty acid synthetic pathway. This chain is Malonyl-[acyl-carrier protein] O-methyltransferase, found in Hahella chejuensis (strain KCTC 2396).